The following is a 61-amino-acid chain: Chromatin protein Cren7 (61 aa).

The protein belongs to the Cren7 family. Monomer. Methylated at multiple sites, to varying extents.

Its subcellular location is the chromosome. It localises to the cytoplasm. Its function is as follows. A chromatin protein, binds double-stranded DNA without sequence specificity. Constrains negative DNA supercoils. The polypeptide is Chromatin protein Cren7 (Caldivirga maquilingensis (strain ATCC 700844 / DSM 13496 / JCM 10307 / IC-167)).